The chain runs to 133 residues: Nickel-responsive regulator (133 aa).

Ni(2+)-binding residues include H76, H87, H89, and C95.

Belongs to the transcriptional regulatory CopG/NikR family. As to quaternary structure, homotetramer. Ni(2+) is required as a cofactor.

In terms of biological role, transcriptional repressor of the nikABCDE operon. Is active in the presence of excessive concentrations of intracellular nickel. In Salmonella arizonae (strain ATCC BAA-731 / CDC346-86 / RSK2980), this protein is Nickel-responsive regulator.